Here is a 123-residue protein sequence, read N- to C-terminus: Large ribosomal subunit protein uL14 (123 aa).

The protein belongs to the universal ribosomal protein uL14 family. Part of the 50S ribosomal subunit. Forms a cluster with proteins L3 and L19. In the 70S ribosome, L14 and L19 interact and together make contacts with the 16S rRNA in bridges B5 and B8.

Functionally, binds to 23S rRNA. Forms part of two intersubunit bridges in the 70S ribosome. The polypeptide is Large ribosomal subunit protein uL14 (Aliivibrio salmonicida (strain LFI1238) (Vibrio salmonicida (strain LFI1238))).